Consider the following 199-residue polypeptide: dTTP/UTP pyrophosphatase (199 aa).

Asp-73 serves as the catalytic Proton acceptor.

It belongs to the Maf family. YhdE subfamily. The cofactor is a divalent metal cation.

The protein resides in the cytoplasm. The catalysed reaction is dTTP + H2O = dTMP + diphosphate + H(+). It catalyses the reaction UTP + H2O = UMP + diphosphate + H(+). Functionally, nucleoside triphosphate pyrophosphatase that hydrolyzes dTTP and UTP. May have a dual role in cell division arrest and in preventing the incorporation of modified nucleotides into cellular nucleic acids. In Caldicellulosiruptor bescii (strain ATCC BAA-1888 / DSM 6725 / KCTC 15123 / Z-1320) (Anaerocellum thermophilum), this protein is dTTP/UTP pyrophosphatase.